The sequence spans 358 residues: Methionine aminopeptidase 2 (358 aa).

His-111 serves as a coordination point for substrate. A divalent metal cation contacts are provided by Asp-131, Asp-142, and His-211. His-219 is a binding site for substrate. A divalent metal cation-binding residues include Glu-244 and Glu-339.

It belongs to the peptidase M24A family. Methionine aminopeptidase eukaryotic type 2 subfamily. The cofactor is Co(2+). Zn(2+) is required as a cofactor. Mn(2+) serves as cofactor. It depends on Fe(2+) as a cofactor.

It is found in the cytoplasm. It carries out the reaction Release of N-terminal amino acids, preferentially methionine, from peptides and arylamides.. In terms of biological role, cotranslationally removes the N-terminal methionine from nascent proteins. The N-terminal methionine is often cleaved when the second residue in the primary sequence is small and uncharged (Met-Ala-, Cys, Gly, Pro, Ser, Thr, or Val). The sequence is that of Methionine aminopeptidase 2 from Laccaria bicolor (strain S238N-H82 / ATCC MYA-4686) (Bicoloured deceiver).